The chain runs to 398 residues: uncharacterized protein (398 aa).

10 helical membrane-spanning segments follow: residues 43–65 (PILPMLITSVGGGSLSIGLVGGL), 89–108 (IFVVLGYLTSSMFKLLLGLS), 156–173 (TAGAILGSTLSLLFILYL), 180–198 (IILIAAVIGFLTLIPLYFV), 224–246 (LFILISAIFTLSNFSYMFYILRA), 259–281 (IIIPIALYILYNIFYATFSIPFG), 291–311 (SVLTIGYIVYGIVSLGFAYFI), 316–338 (LILLFALYGIAYALFAGNQKAYV), 351–373 (LGLFYTVVGLTSLPASLIAGYLW), and 380–397 (TFLYGSVLAIISGLLLLF).

It belongs to the major facilitator superfamily.

The protein localises to the cell membrane. This is an uncharacterized protein from Methanocaldococcus jannaschii (strain ATCC 43067 / DSM 2661 / JAL-1 / JCM 10045 / NBRC 100440) (Methanococcus jannaschii).